We begin with the raw amino-acid sequence, 238 residues long: Uracil-DNA glycosylase (238 aa).

Asp-81 acts as the Proton acceptor in catalysis.

It belongs to the uracil-DNA glycosylase (UDG) superfamily. UNG family.

It is found in the cytoplasm. It carries out the reaction Hydrolyzes single-stranded DNA or mismatched double-stranded DNA and polynucleotides, releasing free uracil.. In terms of biological role, excises uracil residues from the DNA which can arise as a result of misincorporation of dUMP residues by DNA polymerase or due to deamination of cytosine. In Corynebacterium efficiens (strain DSM 44549 / YS-314 / AJ 12310 / JCM 11189 / NBRC 100395), this protein is Uracil-DNA glycosylase.